Reading from the N-terminus, the 115-residue chain is Probable 4-amino-4-deoxy-L-arabinose-phosphoundecaprenol flippase subunit ArnE (115 aa).

The next 3 membrane-spanning stretches (helical) occupy residues 42–62 (PWPWLALLALGLGLLCWLLLL), 65–85 (VEVGSAYPMLALNFVLVTLAA), and 93–112 (VDRRHLAGLLLIVAGVALLG). Residues 46-113 (LALLALGLGL…IVAGVALLGR (68 aa)) enclose the EamA domain.

This sequence belongs to the ArnE family. In terms of assembly, heterodimer of ArnE and ArnF.

The protein resides in the cell inner membrane. It participates in bacterial outer membrane biogenesis; lipopolysaccharide biosynthesis. Functionally, translocates 4-amino-4-deoxy-L-arabinose-phosphoundecaprenol (alpha-L-Ara4N-phosphoundecaprenol) from the cytoplasmic to the periplasmic side of the inner membrane. In Pseudomonas aeruginosa (strain LESB58), this protein is Probable 4-amino-4-deoxy-L-arabinose-phosphoundecaprenol flippase subunit ArnE.